We begin with the raw amino-acid sequence, 89 residues long: Small ribosomal subunit protein uS15 (89 aa).

This sequence belongs to the universal ribosomal protein uS15 family. As to quaternary structure, part of the 30S ribosomal subunit. Forms a bridge to the 50S subunit in the 70S ribosome, contacting the 23S rRNA.

Functionally, one of the primary rRNA binding proteins, it binds directly to 16S rRNA where it helps nucleate assembly of the platform of the 30S subunit by binding and bridging several RNA helices of the 16S rRNA. Its function is as follows. Forms an intersubunit bridge (bridge B4) with the 23S rRNA of the 50S subunit in the ribosome. This Beijerinckia indica subsp. indica (strain ATCC 9039 / DSM 1715 / NCIMB 8712) protein is Small ribosomal subunit protein uS15.